A 130-amino-acid chain; its full sequence is MNGKYYYGTGRRKSSVARVFMQKGSGQIIVNGKPVDEYFARETGRMVIRQPLALTENLESFDIKVNVVGGGETGQAGAIRHGITRALIDFDAALKSALSAAGYVTRDAREVERKKVGLRKARRAKQFSKR.

The protein belongs to the universal ribosomal protein uS9 family.

The polypeptide is Small ribosomal subunit protein uS9 (Chromobacterium violaceum (strain ATCC 12472 / DSM 30191 / JCM 1249 / CCUG 213 / NBRC 12614 / NCIMB 9131 / NCTC 9757 / MK)).